The chain runs to 461 residues: Aspartic proteinase NANA, chloroplast (461 aa).

An N-linked (GlcNAc...) asparagine glycan is attached at Asn86. Positions 106-456 (YFTEIRVGTP…DLMASTLSFA (351 aa)) constitute a Peptidase A1 domain. The active site involves Asp124. The N-linked (GlcNAc...) asparagine glycan is linked to Asn274. Asp338 is an active-site residue. An N-linked (GlcNAc...) asparagine glycan is attached at Asn386.

This sequence belongs to the peptidase A1 family.

The protein localises to the plastid. The protein resides in the chloroplast. With respect to regulation, repressed by pepstatin A. Its function is as follows. Aspartic proteinase that can use azocasein as substrate and regulates endogenous sugar levels (e.g. sucrose, glucose and fructose) by modulating starch accumulation and remobilization. Influences general morphology and development. In Arabidopsis thaliana (Mouse-ear cress), this protein is Aspartic proteinase NANA, chloroplast.